We begin with the raw amino-acid sequence, 609 residues long: Meiotically up-regulated gene 28 protein (609 aa).

RRM domains are found at residues 20–103 and 419–499; these read ISIY…YTHI and CNLF…YAEK.

The protein resides in the cytoplasm. Its function is as follows. Has a role in sporulation. This chain is Meiotically up-regulated gene 28 protein (mug28), found in Schizosaccharomyces pombe (strain 972 / ATCC 24843) (Fission yeast).